A 260-amino-acid polypeptide reads, in one-letter code: Thiamine thiazole synthase (260 aa).

Residues alanine 36, glutamate 55 to glutamine 56, glycine 63, and histidine 154 to aspartate 156 each bind NAD(+). Residues aspartate 156 and histidine 171 each contribute to the Fe cation site. Methionine 224 provides a ligand contact to NAD(+). Position 234 (arginine 234) interacts with glycine.

The protein belongs to the THI4 family. Homooctamer; tetramer of dimers. It depends on Fe(2+) as a cofactor.

It carries out the reaction hydrogen sulfide + glycine + NAD(+) = ADP-5-ethyl-4-methylthiazole-2-carboxylate + nicotinamide + 3 H2O + H(+). It functions in the pathway cofactor biosynthesis; thiamine diphosphate biosynthesis. Functionally, involved in the biosynthesis of the thiazole moiety of thiamine. Catalyzes the conversion of NAD and glycine to adenosine diphosphate 5-(2-hydroxyethyl)-4-methylthiazole-2-carboxylate (ADT), an adenylated thiazole intermediate, using free sulfide as a source of sulfur. This Methanosarcina acetivorans (strain ATCC 35395 / DSM 2834 / JCM 12185 / C2A) protein is Thiamine thiazole synthase.